Consider the following 458-residue polypeptide: ATP synthase subunit beta (458 aa).

148 to 155 provides a ligand contact to ATP; it reads GGAGVGKT.

The protein belongs to the ATPase alpha/beta chains family. F-type ATPases have 2 components, CF(1) - the catalytic core - and CF(0) - the membrane proton channel. CF(1) has five subunits: alpha(3), beta(3), gamma(1), delta(1), epsilon(1). CF(0) has three main subunits: a(1), b(2) and c(9-12). The alpha and beta chains form an alternating ring which encloses part of the gamma chain. CF(1) is attached to CF(0) by a central stalk formed by the gamma and epsilon chains, while a peripheral stalk is formed by the delta and b chains.

It is found in the cell inner membrane. The enzyme catalyses ATP + H2O + 4 H(+)(in) = ADP + phosphate + 5 H(+)(out). Produces ATP from ADP in the presence of a proton gradient across the membrane. The catalytic sites are hosted primarily by the beta subunits. The sequence is that of ATP synthase subunit beta from Stutzerimonas stutzeri (strain A1501) (Pseudomonas stutzeri).